A 375-amino-acid chain; its full sequence is MLEANVYDNFNPNYYNVSDFSMPNGKKEKRGLPIPKARCQVINYELWETGYLYTSSATLTVSVEVGDIVQILFPEVVPIEEALGKKKKLNLDMVYLVTDVDESNKATLKNYFWAMIESLDVPNAITKTTNFAIIDYLIDPSKNNLMSYGYFFNSSIFAGKATINRKAETSSAHDVAKRIFSKVQFQPTTTIQHAPSETDPRNLLFINFASRNWNRKRITTRVDIKQSVTMDTETIVERSAYNFAVVFVKNKATDDYTDPPKMYIAKNNGDVIDYSTYHGDGTDLPDVRTAKTLFYDRDDHGNPPALSTIKVEISPSTIVTRLIFNQNELLPLYVNDLVDIWYEGKLYSGYIADRVKTEFNDRLIFVESGDKPNVI.

The protein belongs to the skunalikevirus baseplate protein gp16 family. As to quaternary structure, homotrimer.

Its subcellular location is the virion. Functionally, forms a dome thereby closing the central channel at the end of the baseplate. Changes its conformation upon activation by calcium allowing the channel to open at the bottom of the baseplate for DNA ejection. The polypeptide is Baseplate protein gp16 (Lactococcus lactis (Lactococcus lactis bacteriophage SK1)).